The sequence spans 88 residues: Putative septation protein SpoVG (88 aa).

The protein belongs to the SpoVG family.

Its function is as follows. Could be involved in septation. The sequence is that of Putative septation protein SpoVG from Desulforudis audaxviator (strain MP104C).